Consider the following 288-residue polypeptide: UTP--glucose-1-phosphate uridylyltransferase (288 aa).

It belongs to the UDPGP type 2 family.

The catalysed reaction is alpha-D-glucose 1-phosphate + UTP + H(+) = UDP-alpha-D-glucose + diphosphate. The protein operates within glycolipid metabolism; diglucosyl-diacylglycerol biosynthesis. Catalyzes the formation of UDP-glucose from glucose-1-phosphate and UTP. This is an intermediate step in the biosynthesis of diglucosyl-diacylglycerol (Glc2-DAG), i.e. the predominant glycolipid found in the S.aureus membrane, which is also used as a membrane anchor for lipoteichoic acid (LTA). This chain is UTP--glucose-1-phosphate uridylyltransferase (gtaB), found in Staphylococcus aureus (strain MRSA252).